The primary structure comprises 979 residues: UPF0182 protein MRA_0066 (979 aa).

Transmembrane regions (helical) follow at residues 19–39 (LVTA…LVDI), 63–83 (LAIV…ALLL), 114–134 (LFGW…ASFD), 174–194 (WLFV…YLFG), 211–231 (VQLA…YWLD), 260–280 (KLVL…AIFL), and 288–308 (MAAA…PLLM). The interval 898–948 (GTGRVATARGGDAASAPPPGAGGPAPPQAVPPPRTTQPPAAPPRGPDVPPA) is disordered. Residues 913-946 (APPPGAGGPAPPQAVPPPRTTQPPAAPPRGPDVP) show a composition bias toward pro residues.

Belongs to the UPF0182 family.

It is found in the cell membrane. This is UPF0182 protein MRA_0066 from Mycobacterium tuberculosis (strain ATCC 25177 / H37Ra).